The chain runs to 255 residues: Acetylglutamate kinase (255 aa).

Substrate-binding positions include 40 to 41, Arg-62, and Asn-153; that span reads GG.

This sequence belongs to the acetylglutamate kinase family. ArgB subfamily.

It is found in the cytoplasm. The catalysed reaction is N-acetyl-L-glutamate + ATP = N-acetyl-L-glutamyl 5-phosphate + ADP. The protein operates within amino-acid biosynthesis; L-arginine biosynthesis; N(2)-acetyl-L-ornithine from L-glutamate: step 2/4. Functionally, catalyzes the ATP-dependent phosphorylation of N-acetyl-L-glutamate. The protein is Acetylglutamate kinase of Bacillus cereus (strain ATCC 14579 / DSM 31 / CCUG 7414 / JCM 2152 / NBRC 15305 / NCIMB 9373 / NCTC 2599 / NRRL B-3711).